The primary structure comprises 169 residues: Ribosome maturation factor RimM (169 aa).

In terms of domain architecture, PRC barrel spans 97–169 (PGEYYWYQLI…VITVDWDMNF (73 aa)).

This sequence belongs to the RimM family. In terms of assembly, binds ribosomal protein uS19.

Its subcellular location is the cytoplasm. An accessory protein needed during the final step in the assembly of 30S ribosomal subunit, possibly for assembly of the head region. Essential for efficient processing of 16S rRNA. May be needed both before and after RbfA during the maturation of 16S rRNA. It has affinity for free ribosomal 30S subunits but not for 70S ribosomes. The sequence is that of Ribosome maturation factor RimM from Legionella pneumophila (strain Paris).